A 340-amino-acid chain; its full sequence is Ketol-acid reductoisomerase (NADP(+)) (340 aa).

Residues 3–183 (VSIYYDKDCD…GGGRTGIIET (181 aa)) enclose the KARI N-terminal Rossmann domain. NADP(+) contacts are provided by residues 26–29 (FGSQ), lysine 49, serine 54, and 84–87 (DEIQ). Histidine 109 is a catalytic residue. Glycine 135 contributes to the NADP(+) binding site. Residues 184–329 (TFKAETETDL…RELRAMMPWI (146 aa)) enclose the KARI C-terminal knotted domain. Aspartate 192, glutamate 196, glutamate 228, and glutamate 232 together coordinate Mg(2+). Serine 253 serves as a coordination point for substrate.

It belongs to the ketol-acid reductoisomerase family. The cofactor is Mg(2+).

The catalysed reaction is (2R)-2,3-dihydroxy-3-methylbutanoate + NADP(+) = (2S)-2-acetolactate + NADPH + H(+). It carries out the reaction (2R,3R)-2,3-dihydroxy-3-methylpentanoate + NADP(+) = (S)-2-ethyl-2-hydroxy-3-oxobutanoate + NADPH + H(+). It participates in amino-acid biosynthesis; L-isoleucine biosynthesis; L-isoleucine from 2-oxobutanoate: step 2/4. Its pathway is amino-acid biosynthesis; L-valine biosynthesis; L-valine from pyruvate: step 2/4. Its function is as follows. Involved in the biosynthesis of branched-chain amino acids (BCAA). Catalyzes an alkyl-migration followed by a ketol-acid reduction of (S)-2-acetolactate (S2AL) to yield (R)-2,3-dihydroxy-isovalerate. In the isomerase reaction, S2AL is rearranged via a Mg-dependent methyl migration to produce 3-hydroxy-3-methyl-2-ketobutyrate (HMKB). In the reductase reaction, this 2-ketoacid undergoes a metal-dependent reduction by NADPH to yield (R)-2,3-dihydroxy-isovalerate. This is Ketol-acid reductoisomerase (NADP(+)) from Campylobacter lari (strain RM2100 / D67 / ATCC BAA-1060).